The following is a 61-amino-acid chain: Small ribosomal subunit protein uS14 (61 aa).

The Zn(2+) site is built by Cys24, Cys27, Cys40, and Cys43.

Belongs to the universal ribosomal protein uS14 family. Zinc-binding uS14 subfamily. Part of the 30S ribosomal subunit. Contacts proteins S3 and S10. The cofactor is Zn(2+).

Functionally, binds 16S rRNA, required for the assembly of 30S particles and may also be responsible for determining the conformation of the 16S rRNA at the A site. The protein is Small ribosomal subunit protein uS14 of Endomicrobium trichonymphae.